A 124-amino-acid chain; its full sequence is Probable glycine cleavage system H protein (124 aa).

Residues 22-104 (TGRVGISEFA…FGDGWLVEID (83 aa)) form the Lipoyl-binding domain. N6-lipoyllysine is present on lysine 63.

This sequence belongs to the GcvH family. In terms of assembly, the glycine cleavage system is composed of four proteins: P, T, L and H. (R)-lipoate serves as cofactor.

Functionally, the glycine cleavage system catalyzes the degradation of glycine. The H protein shuttles the methylamine group of glycine from the P protein to the T protein. This Halobacterium salinarum (strain ATCC 700922 / JCM 11081 / NRC-1) (Halobacterium halobium) protein is Probable glycine cleavage system H protein.